The chain runs to 377 residues: Chaperone protein DnaJ (377 aa).

Residues 6–70 form the J domain; it reads DYYKILGIDK…EKKAIYDKYG (65 aa). The CR-type zinc-finger motif lies at 143–225; the sequence is GRVISQKLDK…CKGAKKIKES (83 aa). 8 residues coordinate Zn(2+): C156, C159, C173, C176, C199, C202, C213, and C216. 4 CXXCXGXG motif repeats span residues 156 to 163, 173 to 180, 199 to 206, and 213 to 220; these read CESCNGTG, CSTCNGRG, CSTCNGLG, and CPSCKGAK.

This sequence belongs to the DnaJ family. In terms of assembly, homodimer. Zn(2+) serves as cofactor.

The protein resides in the cytoplasm. Its function is as follows. Participates actively in the response to hyperosmotic and heat shock by preventing the aggregation of stress-denatured proteins and by disaggregating proteins, also in an autonomous, DnaK-independent fashion. Unfolded proteins bind initially to DnaJ; upon interaction with the DnaJ-bound protein, DnaK hydrolyzes its bound ATP, resulting in the formation of a stable complex. GrpE releases ADP from DnaK; ATP binding to DnaK triggers the release of the substrate protein, thus completing the reaction cycle. Several rounds of ATP-dependent interactions between DnaJ, DnaK and GrpE are required for fully efficient folding. Also involved, together with DnaK and GrpE, in the DNA replication of plasmids through activation of initiation proteins. The chain is Chaperone protein DnaJ from Mycoplasmopsis pulmonis (strain UAB CTIP) (Mycoplasma pulmonis).